Here is a 314-residue protein sequence, read N- to C-terminus: Homoserine O-acetyltransferase (314 aa).

Cysteine 142 serves as the catalytic Acyl-thioester intermediate. Substrate contacts are provided by lysine 163 and serine 192. The active-site Proton acceptor is the histidine 235. Glutamate 237 is a catalytic residue. Arginine 249 is a binding site for substrate.

The protein belongs to the MetA family.

It localises to the cytoplasm. The catalysed reaction is L-homoserine + acetyl-CoA = O-acetyl-L-homoserine + CoA. Its pathway is amino-acid biosynthesis; L-methionine biosynthesis via de novo pathway; O-acetyl-L-homoserine from L-homoserine: step 1/1. Functionally, transfers an acetyl group from acetyl-CoA to L-homoserine, forming acetyl-L-homoserine. The polypeptide is Homoserine O-acetyltransferase (Streptococcus pneumoniae serotype 19F (strain G54)).